A 263-amino-acid chain; its full sequence is 3-methyl-2-oxobutanoate hydroxymethyltransferase (263 aa).

The Mg(2+) site is built by Asp-45 and Asp-84. 3-methyl-2-oxobutanoate contacts are provided by residues 45–46, Asp-84, and Lys-112; that span reads DS. Glu-114 serves as a coordination point for Mg(2+). Glu-181 (proton acceptor) is an active-site residue.

This sequence belongs to the PanB family. Homodecamer; pentamer of dimers. It depends on Mg(2+) as a cofactor.

The protein localises to the cytoplasm. The enzyme catalyses 3-methyl-2-oxobutanoate + (6R)-5,10-methylene-5,6,7,8-tetrahydrofolate + H2O = 2-dehydropantoate + (6S)-5,6,7,8-tetrahydrofolate. It participates in cofactor biosynthesis; (R)-pantothenate biosynthesis; (R)-pantoate from 3-methyl-2-oxobutanoate: step 1/2. Its function is as follows. Catalyzes the reversible reaction in which hydroxymethyl group from 5,10-methylenetetrahydrofolate is transferred onto alpha-ketoisovalerate to form ketopantoate. The sequence is that of 3-methyl-2-oxobutanoate hydroxymethyltransferase from Buchnera aphidicola subsp. Acyrthosiphon pisum (strain 5A).